The sequence spans 156 residues: Terrestric acid biosynthesis cluster protein E (156 aa).

Its pathway is secondary metabolite biosynthesis. In terms of biological role, part of the tra gene cluster that produces terrestric acid. The clavatol biosynthesis cluster cla and the terrestric acid cluster tra are both involved in the production of peniphenones and penilactones. The non-reducing PKS claF is responsible for the formation of clavatol from successive condensations of 3 malonyl-CoA units, presumably with a simple acetyl-CoA starter unit, and 2 methylation steps. The esterase claE probably collaborates with claF by catalyzing the hydrolysis of ACP-bound acyl intermediates to free the ACP from stalled intermediates. The clavatol oxidase claD then converts clavatol to hydroxyclavatol. Spontaneous dehydration of hydroxyclavatol leads to the accumulation of the highly active ortho-quinone methide. On the other hand, the PKS-NRPS hybrid traA is involved in the formation of crustosic acid, with the help of traB and traD. The polyketide synthase module (PKS) of traA is responsible for the synthesis of the polyketide backbone via the condensation of an acetyl-CoA starter unit with 3 malonyl-CoA units. The downstream nonribosomal peptide synthetase (NRPS) module then amidates the carboxyl end of the polyketide with L-malic acid. Because traA lacks a designated enoylreductase (ER) domain, the required activity is provided the enoyl reductase traG. Crustosic acid undergoes decarboxylation and isomerization to the terrestric acid, catalyzed by the 2-oxoglutarate-dependent dioxygenase traH. Both acids are further converted to the 2 gamma-butyrolactones (R)-5-methyltetronic acid and (S)-5-carboxylmethyltetronic acid, with involvement of the cytochrome P450 monooxygenase claJ. Spontaneous addition of the methide to these gamma-butyrolactones leads to peniphenone D and penilactone D, which undergo again stereospecific attacking by methide to give penilactones A and B. TraE seems not to be involved in the biosynthesis of peniphenones and penilactones in the conditions used to study its function. This is Terrestric acid biosynthesis cluster protein E from Penicillium crustosum (Blue mold fungus).